Here is a 285-residue protein sequence, read N- to C-terminus: Probable adenylate kinase 6, chloroplastic (285 aa).

Residues 1-33 (MAAISRAIRACAAAGSRRSMASSAKEVAAAGAR) constitute a chloroplast transit peptide. 63–68 (GVGKGT) is an ATP binding site. Positions 83 to 112 (ATGDLVRDALASPGPFSEQLAEIVNNGKLV) are NMP. AMP-binding positions include threonine 84, arginine 89, 110 to 112 (KLV), 140 to 143 (GFPR), and glutamine 147. The segment at 176-224 (GRRMCSQCGGNFNVASIDMEGENGGPRMYMPPLLPPPQCESKLITRPDD) is LID. ATP contacts are provided by residues arginine 177 and 186–187 (NF). Positions 221 and 232 each coordinate AMP.

The protein belongs to the adenylate kinase family.

The protein localises to the plastid. Its subcellular location is the chloroplast. It catalyses the reaction AMP + ATP = 2 ADP. Functionally, catalyzes the reversible transfer of the terminal phosphate group between ATP and AMP. Plays an important role in cellular energy homeostasis and in adenine nucleotide metabolism. This Oryza sativa subsp. japonica (Rice) protein is Probable adenylate kinase 6, chloroplastic.